The chain runs to 207 residues: 3-isopropylmalate dehydratase small subunit (207 aa).

It belongs to the LeuD family. LeuD type 1 subfamily. Heterodimer of LeuC and LeuD.

It catalyses the reaction (2R,3S)-3-isopropylmalate = (2S)-2-isopropylmalate. Its pathway is amino-acid biosynthesis; L-leucine biosynthesis; L-leucine from 3-methyl-2-oxobutanoate: step 2/4. Catalyzes the isomerization between 2-isopropylmalate and 3-isopropylmalate, via the formation of 2-isopropylmaleate. The polypeptide is 3-isopropylmalate dehydratase small subunit (Acidithiobacillus ferrooxidans (strain ATCC 23270 / DSM 14882 / CIP 104768 / NCIMB 8455) (Ferrobacillus ferrooxidans (strain ATCC 23270))).